We begin with the raw amino-acid sequence, 90 residues long: Small ribosomal subunit protein uS15 (90 aa).

The protein belongs to the universal ribosomal protein uS15 family. Part of the 30S ribosomal subunit. Forms a bridge to the 50S subunit in the 70S ribosome, contacting the 23S rRNA.

Functionally, one of the primary rRNA binding proteins, it binds directly to 16S rRNA where it helps nucleate assembly of the platform of the 30S subunit by binding and bridging several RNA helices of the 16S rRNA. Forms an intersubunit bridge (bridge B4) with the 23S rRNA of the 50S subunit in the ribosome. This chain is Small ribosomal subunit protein uS15, found in Helicobacter pylori (strain Shi470).